A 183-amino-acid polypeptide reads, in one-letter code: UPF0398 protein MCCL_1095 (183 aa).

The protein belongs to the UPF0398 family.

The chain is UPF0398 protein MCCL_1095 from Macrococcus caseolyticus (strain JCSC5402) (Macrococcoides caseolyticum).